Here is a 38-residue protein sequence, read N- to C-terminus: Large ribosomal subunit protein bL36 (38 aa).

Belongs to the bacterial ribosomal protein bL36 family.

The chain is Large ribosomal subunit protein bL36 from Ectopseudomonas mendocina (strain ymp) (Pseudomonas mendocina).